We begin with the raw amino-acid sequence, 358 residues long: Sulfoquinovosyl glycerol transport ATP-binding protein SmoE (358 aa).

Residues 4 to 234 form the ABC transporter domain; sequence VSLRKLDKSY…PESVFVGGFV (231 aa). 36 to 43 serves as a coordination point for ATP; sequence GPSGCGKS.

It belongs to the ABC transporter superfamily. In terms of assembly, the complex is probably composed of two ATP-binding proteins (SmoE), two transmembrane proteins (SmoG and SmoH) and a solute-binding protein (SmoF).

The protein localises to the cell inner membrane. Functionally, part of the ABC transporter complex SmoEFGH involved in sulfoquinovosyl glycerol (SQGro) uptake. Responsible for energy coupling to the transport system. This is Sulfoquinovosyl glycerol transport ATP-binding protein SmoE from Agrobacterium fabrum (strain C58 / ATCC 33970) (Agrobacterium tumefaciens (strain C58)).